A 92-amino-acid polypeptide reads, in one-letter code: Protein S100-A5 (92 aa).

EF-hand domains follow at residues 12-47 (MVTT…LGEM) and 47-82 (MKES…LCMA). Positions 28, 33, 60, 62, 64, 66, and 71 each coordinate Ca(2+).

Belongs to the S-100 family. Homodimer.

Functionally, binds calcium, zinc and copper. One subunit can simultaneously bind 2 calcium ions or 2 copper ions plus 1 zinc ion. Calcium and copper ions compete for the same binding sites. In Homo sapiens (Human), this protein is Protein S100-A5 (S100A5).